The chain runs to 428 residues: Methyl-branched lipid omega-hydroxylase (428 aa).

Cys-379 is a binding site for heme.

Belongs to the cytochrome P450 family. Heme is required as a cofactor.

It carries out the reaction a methyl-branched lipid + O2 + 2 reduced ferredoxin [iron-sulfur] cluster + 2 H(+) = an omega-hydroxy-methyl-branched lipid + H2O + 2 oxidized ferredoxin [iron-sulfur] cluster.. The catalysed reaction is cholest-4-en-3-one + 6 reduced [2Fe-2S]-[ferredoxin] + 3 O2 + 5 H(+) = (25R)-3-oxocholest-4-en-26-oate + 6 oxidized [2Fe-2S]-[ferredoxin] + 4 H2O. Its pathway is lipid metabolism; branched-chain fatty acid metabolism. Its function is as follows. Primarily hydroxylates the omega-carbon of a number of methyl-branched lipids, including (2E,6E)-farnesol, phytanate, geranylgeraniol, 15-methylpalmitate and (2E,6E)-farnesyl diphosphate. Also catalyzes the sequential oxidation of the terminal methyl of cholest-4-en-3-one into (25R)-26-hydroxycholest-4-en-3-one (alcohol), (25R)-26-oxocholest-4-en-3-one (aldehyde), to finally yield the carboxylic acid (25R)-3-oxocholest-4-en-26-oate. Also able to sequentially oxidize cholesterol itself, not only cholest-4-en-3-one. This is Methyl-branched lipid omega-hydroxylase (cyp124) from Mycobacterium tuberculosis (strain CDC 1551 / Oshkosh).